The following is a 377-amino-acid chain: WAT1-related protein At5g13670 (377 aa).

Transmembrane regions (helical) follow at residues 9–29, 38–58, 64–84, 99–119, 136–156, 187–207, 214–234, 251–271, 279–299, and 303–323; these read FIAI…AKLA, VLVA…ALIL, PKLT…EPVV, TFTS…ACVF, VGTM…GNVI, IMLV…AKIL, LSLT…MGLI, LLAS…IGWA, FVSA…TFVF, and VYVG…LVLW. EamA domains are found at residues 18-149 and 194-322; these read LYAL…MLMT and FSWS…YLVL.

The protein belongs to the drug/metabolite transporter (DMT) superfamily. Plant drug/metabolite exporter (P-DME) (TC 2.A.7.4) family.

The protein localises to the membrane. The polypeptide is WAT1-related protein At5g13670 (Arabidopsis thaliana (Mouse-ear cress)).